The following is a 445-amino-acid chain: Acyl-CoA Delta-4 desaturase (445 aa).

The 78-residue stretch at 19–96 folds into the Cytochrome b5 heme-binding domain; that stretch reads AGVYTWEEVQ…MKPLLVGELA (78 aa). Helical transmembrane passes span 132 to 152, 153 to 173, 266 to 286, and 307 to 327; these read LFFL…LLMV, WHWG…ATAQ, YFFL…NIMM, and YMLC…MMFA.

Belongs to the fatty acid desaturase type 1 family.

It is found in the membrane. It carries out the reaction (8Z,11Z,14Z,17Z)-eicosatetraenoyl-CoA + 2 Fe(II)-[cytochrome b5] + O2 + 2 H(+) = (5Z,8Z,11Z,14Z,17Z)-eicosapentaenoyl-CoA + 2 Fe(III)-[cytochrome b5] + 2 H2O. The catalysed reaction is (7Z,10Z,13Z,16Z)-docosatetraenoyl-CoA + 2 Fe(II)-[cytochrome b5] + O2 + 2 H(+) = (4Z,7Z,10Z,13Z,16Z)-docosapentaenoyl-CoA + 2 Fe(III)-[cytochrome b5] + 2 H2O. The enzyme catalyses (7Z,10Z,13Z,16Z,19Z)-docosapentaenoyl-CoA + 2 Fe(II)-[cytochrome b5] + O2 + 2 H(+) = (4Z,7Z,10Z,13Z,16Z,19Z)-docosahexaenoyl-CoA + 2 Fe(III)-[cytochrome b5] + 2 H2O. It participates in lipid metabolism; polyunsaturated fatty acid biosynthesis. Fatty acid desaturase with bifunctional delta-4 and delta-5 activities. Component of a lipid metabolic pathway that catalyzes the biosynthesis of polyunsaturated fatty acids (PUFA) with preference toward n-3 substrates and Delta(4)function. In Siganus canaliculatus (White-spotted spinefoot), this protein is Acyl-CoA Delta-4 desaturase.